We begin with the raw amino-acid sequence, 358 residues long: tRNA N6-adenosine threonylcarbamoyltransferase (358 aa).

2 residues coordinate Fe cation: histidine 111 and histidine 115. Substrate is bound by residues 146 to 150, aspartate 179, glycine 192, and asparagine 294; that span reads LVSGG. Aspartate 322 provides a ligand contact to Fe cation.

This sequence belongs to the KAE1 / TsaD family. Fe(2+) serves as cofactor.

Its subcellular location is the cytoplasm. The catalysed reaction is L-threonylcarbamoyladenylate + adenosine(37) in tRNA = N(6)-L-threonylcarbamoyladenosine(37) in tRNA + AMP + H(+). In terms of biological role, required for the formation of a threonylcarbamoyl group on adenosine at position 37 (t(6)A37) in tRNAs that read codons beginning with adenine. Is involved in the transfer of the threonylcarbamoyl moiety of threonylcarbamoyl-AMP (TC-AMP) to the N6 group of A37, together with TsaE and TsaB. TsaD likely plays a direct catalytic role in this reaction. The protein is tRNA N6-adenosine threonylcarbamoyltransferase of Helicobacter hepaticus (strain ATCC 51449 / 3B1).